A 508-amino-acid polypeptide reads, in one-letter code: Maturase K (508 aa).

It belongs to the intron maturase 2 family. MatK subfamily.

It localises to the plastid. The protein resides in the chloroplast. Functionally, usually encoded in the trnK tRNA gene intron. Probably assists in splicing its own and other chloroplast group II introns. This Chaetosphaeridium globosum (Charophycean green alga) protein is Maturase K.